The chain runs to 1094 residues: Protein transport protein Sec24C (1094 aa).

The segment at 1–338 (MNVNQSVPPV…PIQVIEDDRN (338 aa)) is disordered. Residues 8–19 (PPVPPFGQPQPI) show a composition bias toward pro residues. Composition is skewed to low complexity over residues 20-29 (YPGYHQSSYG) and 60-77 (SRAP…AQAP). The span at 90–101 (DVQNGPSSTVQM) shows a compositional bias: polar residues. A compositionally biased stretch (pro residues) spans 123-132 (VLQPYGPPPT). Composition is skewed to polar residues over residues 133 to 144 (SAQVATQLSGMQ), 165 to 175 (SLASASGSFPN), 189 to 215 (PLSQ…SFTP), and 240 to 251 (SVSQPNHVSSPP). Phosphothreonine is present on Thr214. Residues 273–282 (PQQPGYQPQQ) are compositionally biased toward low complexity. Zn(2+) contacts are provided by Cys425, Cys428, Cys447, and Cys450. The interval 425–450 (CNRCKAYMCPFMQFIEGGRRFQCCFC) is zinc finger-like. The stretch at 962 to 1034 (TTEPPAVRAS…DNPLSKKVRG (73 aa)) is one Gelsolin-like repeat.

Belongs to the SEC23/SEC24 family. SEC24 subfamily. In terms of assembly, COPII is composed of at least five proteins: the Sec23/24 complex, the Sec13/31 complex and Sar1. Interacts with TMED2 and TMED10. Interacts with GOSR2 (via IxM motif) and STX5 (via IxM motif); recruits GOSR2 and STX5 into COPII-coated vesicles. Interacts with DDHD1. Interacts with STING1; promoting STING1 translocation to the COPII vesicles. In terms of tissue distribution, ubiquitous.

The protein localises to the cytoplasmic vesicle. It is found in the COPII-coated vesicle membrane. It localises to the endoplasmic reticulum membrane. The protein resides in the cytoplasm. Its subcellular location is the cytosol. Its function is as follows. Component of the coat protein complex II (COPII) which promotes the formation of transport vesicles from the endoplasmic reticulum (ER). The coat has two main functions, the physical deformation of the endoplasmic reticulum membrane into vesicles and the selection of cargo molecules for their transport to the Golgi complex. Plays a central role in cargo selection within the COPII complex and together with SEC24D may have a different specificity compared to SEC24A and SEC24B. May more specifically package GPI-anchored proteins through the cargo receptor TMED10. May also be specific for IxM motif-containing cargos like the SNAREs GOSR2 and STX5. The polypeptide is Protein transport protein Sec24C (Homo sapiens (Human)).